Reading from the N-terminus, the 56-residue chain is uncharacterized protein (56 aa).

This is an uncharacterized protein from Saccharomyces cerevisiae (strain ATCC 204508 / S288c) (Baker's yeast).